The primary structure comprises 232 residues: Zinc-finger homeodomain protein 5 (232 aa).

A compositionally biased stretch (acidic residues) spans Met1–Gly11. The tract at residues Met1–His25 is disordered. The segment at Tyr40–Asp86 adopts a ZF-HD dimerization-type; degenerate zinc-finger fold. The disordered stretch occupies residues Gly126–Gln170. Residues Arg159–Gln222 constitute a DNA-binding region (homeobox).

Homo- and heterodimer with other ZFHD proteins.

The protein resides in the nucleus. Functionally, putative transcription factor. The sequence is that of Zinc-finger homeodomain protein 5 (ZHD5) from Oryza sativa subsp. japonica (Rice).